The primary structure comprises 531 residues: 2,3-bisphosphoglycerate-independent phosphoglycerate mutase (531 aa).

Residues Asp13 and Ser63 each contribute to the Mn(2+) site. The Phosphoserine intermediate role is filled by Ser63. Substrate contacts are provided by residues His124, 154 to 155, Arg187, Arg193, 261 to 264, and Lys342; these read RD and RPDR. Mn(2+) contacts are provided by Asp420, His424, Asp462, His463, and His480.

The protein belongs to the BPG-independent phosphoglycerate mutase family. As to quaternary structure, monomer. The cofactor is Mn(2+).

The enzyme catalyses (2R)-2-phosphoglycerate = (2R)-3-phosphoglycerate. It functions in the pathway carbohydrate degradation; glycolysis; pyruvate from D-glyceraldehyde 3-phosphate: step 3/5. Its function is as follows. Catalyzes the interconversion of 2-phosphoglycerate and 3-phosphoglycerate. The sequence is that of 2,3-bisphosphoglycerate-independent phosphoglycerate mutase from Mycoplasma mycoides subsp. mycoides SC (strain CCUG 32753 / NCTC 10114 / PG1).